We begin with the raw amino-acid sequence, 80 residues long: Protein pegasus (80 aa).

The first 22 residues, 1–22, serve as a signal peptide directing secretion; that stretch reads MKLSAVLLAIALLALSLVQCLG. The region spanning 24–80 is the Kazal-like domain; sequence PDPSTKCVMECDTQEYRSICAADDKGSTKTYRNLCVMKTENCLQNANFQKISDKECP. Disulfide bonds link Cys-30/Cys-65, Cys-34/Cys-58, and Cys-43/Cys-79.

Interacts with wg; the interaction facilitates short-range diffusion of wg. In terms of tissue distribution, strongly expressed in the developing fly wing but is excluded from the presumptive wing margin.

It is found in the secreted. Its function is as follows. Increases short-range diffusion of the wingless/wg protein, enhancing its signaling and expression of target genes required for wing margin morphogenesis. May act as a serine protease inhibitor since it possess the Kazal serine protease inhibitor signature. The sequence is that of Protein pegasus from Drosophila melanogaster (Fruit fly).